Reading from the N-terminus, the 225-residue chain is Urease accessory protein UreG (225 aa).

A GTP-binding site is contributed by 25–32; it reads GPVGAGKT.

It belongs to the SIMIBI class G3E GTPase family. UreG subfamily. In terms of assembly, homodimer. UreD, UreF and UreG form a complex that acts as a GTP-hydrolysis-dependent molecular chaperone, activating the urease apoprotein by helping to assemble the nickel containing metallocenter of UreC. The UreE protein probably delivers the nickel.

Its subcellular location is the cytoplasm. Functionally, facilitates the functional incorporation of the urease nickel metallocenter. This process requires GTP hydrolysis, probably effectuated by UreG. The chain is Urease accessory protein UreG from Haemophilus influenzae (strain ATCC 51907 / DSM 11121 / KW20 / Rd).